The sequence spans 185 residues: Ribosome-recycling factor (185 aa).

Belongs to the RRF family.

The protein resides in the cytoplasm. Its function is as follows. Responsible for the release of ribosomes from messenger RNA at the termination of protein biosynthesis. May increase the efficiency of translation by recycling ribosomes from one round of translation to another. The polypeptide is Ribosome-recycling factor (Rhodospirillum centenum (strain ATCC 51521 / SW)).